The primary structure comprises 931 residues: Netrin receptor UNC5C (931 aa).

A signal peptide spans 1–40; the sequence is MRKGLRATAARCGLGLGYLLQMLVLPALALLSASGTGSAA. Residues 41–380 are Extracellular-facing; that stretch reads QDDEFFHELP…APDSDDVALY (340 aa). In terms of domain architecture, Ig-like spans 62–159; the sequence is PHFLIEPEEA…AGTTKSRKAY (98 aa). 9 disulfide bridges follow: Cys83–Cys144, Cys95–Cys142, Cys188–Cys239, Cys272–Cys309, Cys276–Cys313, Cys287–Cys299, Cys328–Cys362, Cys332–Cys367, and Cys340–Cys352. Residues 161–256 enclose the Ig-like C2-type domain; that stretch reads RIAYLRKTFE…KRKSTTATVI (96 aa). N-linked (GlcNAc...) asparagine glycosylation occurs at Asn236. 2 consecutive TSP type-1 domains span residues 260–314 and 316–368; these read NGGW…TLCP and DGRW…GLCM. A glycan (N-linked (GlcNAc...) asparagine) is linked at Asn361. Residues 381–401 traverse the membrane as a helical segment; the sequence is VGIVIAVTVCLAITVVVALFV. The Cytoplasmic segment spans residues 402-931; it reads YRKNHRDFES…VVSLAAEGQY (530 aa). Residues 402–931 form a required for netrin-mediated axon repulsion of neuronal growth cones region; the sequence is YRKNHRDFES…VVSLAAEGQY (530 aa). A Phosphoserine modification is found at Ser502. Positions 530–673 constitute a ZU5 domain; the sequence is CTAFGTFNSL…LSTYALVGQS (144 aa). At Tyr568 the chain carries Phosphotyrosine. The tract at residues 694–712 is interaction with DCC; sequence SLEYSIRVYCLDDTQDALK. A Death domain is found at 850–929; the sequence is QKLCSSLDAP…ETVVSLAAEG (80 aa).

It belongs to the unc-5 family. As to quaternary structure, interacts with DCC (via cytoplasmic domain). Interacts (tyrosine phosphorylated form) with PTPN11. Interacts (via extracellular domain) with FLRT3 (via extracellular domain). Interacts (via Ig-like C2-type domain) with DSCAM (via extracellular domain). Interacts (via death domain) with DAPK1. Interacts (via cytoplasmic domain) with TUBB3; this interaction is decreased by NTN1/Netrin-1. Post-translationally, phosphorylated on different cytoplasmic tyrosine residues. Phosphorylation of Tyr-568 leads to an interaction with PTPN11 phosphatase, suggesting that its activity is regulated by phosphorylation/dephosphorylation. Tyrosine phosphorylation is netrin-dependent. In terms of processing, proteolytically cleaved by caspases during apoptosis. The cleavage does not take place when the receptor is associated with netrin ligand. Its cleavage by caspases is required to induce apoptosis. In terms of tissue distribution, expressed in cortical and cerebellar neurons, including cells of the external and internal granular layer and of the Purkinje cell layer (at protein level). Mainly expressed in regions of differentiating neurons. Highly expressed in brain and lung. Expressed in the cerebellum and the neurons of the hippocampus, with enrichment in neurons of the CA3 hippocampal pyramidal layer. Weakly expressed in testis, ovary, spleen, thymus and bladder. Expressed at very low level in kidney, intestine and salivary gland.

Its subcellular location is the cell membrane. It localises to the cell surface. The protein resides in the synapse. The protein localises to the synaptosome. It is found in the cell projection. Its subcellular location is the dendrite. It localises to the axon. The protein resides in the growth cone. The protein localises to the lamellipodium. It is found in the filopodium. Receptor for netrin required for axon guidance. Mediates axon repulsion of neuronal growth cones in the developing nervous system upon ligand binding. NTN1/Netrin-1 binding might cause dissociation of UNC5C from polymerized TUBB3 in microtubules and thereby lead to increased microtubule dynamics and axon repulsion. Axon repulsion in growth cones may also be caused by its association with DCC that may trigger signaling for repulsion. Might also collaborate with DSCAM in NTN1-mediated axon repulsion independently of DCC. Also involved in corticospinal tract axon guidance independently of DCC. Involved in dorsal root ganglion axon projection towards the spinal cord. It also acts as a dependence receptor required for apoptosis induction when not associated with netrin ligand. This Mus musculus (Mouse) protein is Netrin receptor UNC5C (Unc5c).